Here is a 128-residue protein sequence, read N- to C-terminus: Small ribosomal subunit protein bS6 (128 aa).

Belongs to the bacterial ribosomal protein bS6 family.

Its function is as follows. Binds together with bS18 to 16S ribosomal RNA. The protein is Small ribosomal subunit protein bS6 of Geotalea uraniireducens (strain Rf4) (Geobacter uraniireducens).